The primary structure comprises 568 residues: 2-isopropylmalate synthase (568 aa).

In terms of domain architecture, Pyruvate carboxyltransferase spans 37–313 (PRWLSTDLRD…DPMIDFSNID (277 aa)). Asp-46, His-252, His-254, and Asn-288 together coordinate Mg(2+). Positions 455–568 (EGVVGVMAYR…CSAVNRAQQS (114 aa)) are regulatory domain.

The protein belongs to the alpha-IPM synthase/homocitrate synthase family. LeuA type 2 subfamily. As to quaternary structure, homodimer. Mg(2+) is required as a cofactor.

The protein resides in the cytoplasm. The enzyme catalyses 3-methyl-2-oxobutanoate + acetyl-CoA + H2O = (2S)-2-isopropylmalate + CoA + H(+). It participates in amino-acid biosynthesis; L-leucine biosynthesis; L-leucine from 3-methyl-2-oxobutanoate: step 1/4. Catalyzes the condensation of the acetyl group of acetyl-CoA with 3-methyl-2-oxobutanoate (2-ketoisovalerate) to form 3-carboxy-3-hydroxy-4-methylpentanoate (2-isopropylmalate). The chain is 2-isopropylmalate synthase from Thermobifida fusca (strain YX).